The chain runs to 727 residues: Catalase-peroxidase (727 aa).

The disordered stretch occupies residues 1–24 (MDQKSDSAGKCPVAHTAPRGRSNR). The segment at residues 95-217 (WHSAGTYRIT…LAAVQMGLIY (123 aa)) is a cross-link (tryptophyl-tyrosyl-methioninium (Trp-Tyr) (with M-243)). His96 serves as the catalytic Proton acceptor. Positions 217-243 (YVNPEGPNGNPDPVAAARDIRETFARM) form a cross-link, tryptophyl-tyrosyl-methioninium (Tyr-Met) (with W-95). His258 lines the heme b pocket.

This sequence belongs to the peroxidase family. Peroxidase/catalase subfamily. Homodimer or homotetramer. The cofactor is heme b. Post-translationally, formation of the three residue Trp-Tyr-Met cross-link is important for the catalase, but not the peroxidase activity of the enzyme.

It catalyses the reaction H2O2 + AH2 = A + 2 H2O. It carries out the reaction 2 H2O2 = O2 + 2 H2O. Bifunctional enzyme with both catalase and broad-spectrum peroxidase activity. The protein is Catalase-peroxidase of Rhizobium meliloti (strain 1021) (Ensifer meliloti).